The sequence spans 490 residues: Protein nucleotidyltransferase YdiU (490 aa).

Residues G86, G88, R89, K109, D121, G122, R172, and R179 each coordinate ATP. D248 acts as the Proton acceptor in catalysis. N249 and D258 together coordinate Mg(2+). D258 lines the ATP pocket.

The protein belongs to the SELO family. Mg(2+) is required as a cofactor. It depends on Mn(2+) as a cofactor.

The catalysed reaction is L-seryl-[protein] + ATP = 3-O-(5'-adenylyl)-L-seryl-[protein] + diphosphate. The enzyme catalyses L-threonyl-[protein] + ATP = 3-O-(5'-adenylyl)-L-threonyl-[protein] + diphosphate. It carries out the reaction L-tyrosyl-[protein] + ATP = O-(5'-adenylyl)-L-tyrosyl-[protein] + diphosphate. It catalyses the reaction L-histidyl-[protein] + UTP = N(tele)-(5'-uridylyl)-L-histidyl-[protein] + diphosphate. The catalysed reaction is L-seryl-[protein] + UTP = O-(5'-uridylyl)-L-seryl-[protein] + diphosphate. The enzyme catalyses L-tyrosyl-[protein] + UTP = O-(5'-uridylyl)-L-tyrosyl-[protein] + diphosphate. In terms of biological role, nucleotidyltransferase involved in the post-translational modification of proteins. It can catalyze the addition of adenosine monophosphate (AMP) or uridine monophosphate (UMP) to a protein, resulting in modifications known as AMPylation and UMPylation. The protein is Protein nucleotidyltransferase YdiU of Rhizobium meliloti (strain 1021) (Ensifer meliloti).